The chain runs to 173 residues: Large ribosomal subunit protein uL15 (173 aa).

The span at 1-11 shows a compositional bias: basic and acidic residues; the sequence is MKLNEIRDNQG. The tract at residues 1-50 is disordered; sequence MKLNEIRDNQGARKSRVRVGRGIGSGLGKTGGRGQKGQKSRSGVSINGFE. Gly residues predominate over residues 21–35; the sequence is RGIGSGLGKTGGRGQ.

Belongs to the universal ribosomal protein uL15 family. As to quaternary structure, part of the 50S ribosomal subunit.

Binds to the 23S rRNA. This Rhizorhabdus wittichii (strain DSM 6014 / CCUG 31198 / JCM 15750 / NBRC 105917 / EY 4224 / RW1) (Sphingomonas wittichii) protein is Large ribosomal subunit protein uL15.